Here is a 603-residue protein sequence, read N- to C-terminus: Iron-sulfur clusters transporter ATM1, mitochondrial (603 aa).

The helical transmembrane segment at 20-41 threads the bilayer; it reads VLLAVGLLVGGKVLNVQVPFFF. Residues 20–310 form the ABC transmembrane type-1 domain; the sequence is VLLAVGLLVG…LGSVYRELRQ (291 aa). Residues 42–64 lie on the Mitochondrial intermembrane side of the membrane; that stretch reads REIVDSLNVDIAATGGTVATVAG. A helical transmembrane segment spans residues 65 to 88; it reads TMIFAYGASRIGAVVSQELRNAVF. Over 89 to 137 the chain is Mitochondrial matrix; it reads SSVAQKAIRRVATRTFGHLLNLDLNFHLSKQTGGLTRAIDRGTKGISFL. Residues 138–161 traverse the membrane as a helical segment; that stretch reads LTSMVFHIVPTALEISMVCGILTY. Residue Gln-162 is a topological domain, mitochondrial intermembrane. Residues 163–183 form a helical membrane-spanning segment; the sequence is FGWEFAAVTALTMSAYTAFTI. The Mitochondrial matrix portion of the chain corresponds to 184–249; sequence WTTAWRTKFR…SSIKVATSLA (66 aa). Residues 189-193 and 252-255 each bind glutathione; these read RTKFR and NSGQ. Residues 250 to 268 traverse the membrane as a helical segment; that stretch reads FLNSGQNIIFSSALTIMMW. Over 269–283 the chain is Mitochondrial intermembrane; sequence LGAKGIVAGSLSVGD. The chain crosses the membrane as a helical span at residues 284 to 305; it reads LVLINQLVFQLSVPLNFLGSVY. Gly-302 contributes to the glutathione binding site. At 306–603 the chain is on the mitochondrial matrix side; sequence RELRQSLLDM…SEREAPVPVK (298 aa). In terms of domain architecture, ABC transporter spans 345 to 581; that stretch reads IRFDNVSFGY…NGLYTELWMA (237 aa). Residues Tyr-354 and 378–389 each bind ATP; that span reads GPSGCGKSTLLR.

This sequence belongs to the ABC transporter superfamily. ABCB family. Heavy Metal importer (TC 3.A.1.210) subfamily. Homodimer.

The protein localises to the mitochondrion inner membrane. Its function is as follows. Performs an essential function in the generation of cytoplasmic iron-sulfur proteins by mediating the ATP-dependent export of Fe/S cluster precursors synthesized by NFS1 and other mitochondrial proteins. Hydrolyzes ATP. Binds glutathione and may function by transporting a glutathione-conjugated iron-sulfur compound. This is Iron-sulfur clusters transporter ATM1, mitochondrial from Chaetomium globosum (strain ATCC 6205 / CBS 148.51 / DSM 1962 / NBRC 6347 / NRRL 1970) (Soil fungus).